Consider the following 102-residue polypeptide: Small ribosomal subunit protein uS10 (102 aa).

This sequence belongs to the universal ribosomal protein uS10 family. Part of the 30S ribosomal subunit.

Its function is as follows. Involved in the binding of tRNA to the ribosomes. This is Small ribosomal subunit protein uS10 from Opitutus terrae (strain DSM 11246 / JCM 15787 / PB90-1).